We begin with the raw amino-acid sequence, 371 residues long: tRNA 2-selenouridine synthase (371 aa).

Residues 12-135 (FLDDVPMMDM…MRTFLLDTTQ (124 aa)) enclose the Rhodanese domain. The active-site S-selanylcysteine intermediate is cysteine 95.

Belongs to the SelU family. As to quaternary structure, monomer.

The enzyme catalyses 5-methylaminomethyl-2-thiouridine(34) in tRNA + selenophosphate + (2E)-geranyl diphosphate + H2O + H(+) = 5-methylaminomethyl-2-selenouridine(34) in tRNA + (2E)-thiogeraniol + phosphate + diphosphate. It carries out the reaction 5-methylaminomethyl-2-thiouridine(34) in tRNA + (2E)-geranyl diphosphate = 5-methylaminomethyl-S-(2E)-geranyl-thiouridine(34) in tRNA + diphosphate. The catalysed reaction is 5-methylaminomethyl-S-(2E)-geranyl-thiouridine(34) in tRNA + selenophosphate + H(+) = 5-methylaminomethyl-2-(Se-phospho)selenouridine(34) in tRNA + (2E)-thiogeraniol. It catalyses the reaction 5-methylaminomethyl-2-(Se-phospho)selenouridine(34) in tRNA + H2O = 5-methylaminomethyl-2-selenouridine(34) in tRNA + phosphate. In terms of biological role, involved in the post-transcriptional modification of the uridine at the wobble position (U34) of tRNA(Lys), tRNA(Glu) and tRNA(Gln). Catalyzes the conversion of 2-thiouridine (S2U-RNA) to 2-selenouridine (Se2U-RNA). Acts in a two-step process involving geranylation of 2-thiouridine (S2U) to S-geranyl-2-thiouridine (geS2U) and subsequent selenation of the latter derivative to 2-selenouridine (Se2U) in the tRNA chain. The polypeptide is tRNA 2-selenouridine synthase (Pseudomonas entomophila (strain L48)).